A 337-amino-acid polypeptide reads, in one-letter code: Protein-arginine kinase (337 aa).

The Phosphagen kinase C-terminal domain occupies 12 to 240; it reads IVIASKVKIL…NKLILREKNQ (229 aa). ATP contacts are provided by residues 15–19, 162–166, and 193–198; these read ASKVK, RTKVF, and KSIYNS.

It belongs to the ATP:guanido phosphotransferase family.

The enzyme catalyses L-arginyl-[protein] + ATP = N(omega)-phospho-L-arginyl-[protein] + ADP + H(+). Its function is as follows. Catalyzes the specific phosphorylation of arginine residues in proteins. In Clostridium perfringens (strain 13 / Type A), this protein is Protein-arginine kinase.